The chain runs to 544 residues: Ceramide glucosyltransferase (544 aa).

Over 1 to 15 (MVQEELSLFRITTGY) the chain is Lumenal. A helical transmembrane segment spans residues 16-36 (FFLLWYIIILVAAYSGFFEIL). Topologically, residues 37–427 (FNFRNRPILH…LATLIEPTTE (391 aa)) are cytoplasmic. Residue Asp-109 is a short sequence motif, D1. Residue Asp-171 is a short sequence motif, D2. A short sequence motif (D3) is located at residue Asp-364. The active-site Proton acceptor is Asp-364. The short motif at 404–408 (RRVRW) is the (Q/R)XXRW element. The helical transmembrane segment at 428–448 (SIICGIYGTYAISTVFFGTWF) threads the bilayer. The Lumenal segment spans residues 449–451 (NKY). The chain crosses the membrane as a helical span at residues 452-472 (WFVMHMLIWMLTDYVQYHTLI). Topologically, residues 473 to 501 (NHTLDVKNITYLPNWLNESIPPKQRNCLQ) are cytoplasmic. A helical membrane pass occupies residues 502-522 (WGYIWILRELLALPIWIIAMI). Topologically, residues 523-544 (GHEIDWRGRPFRIKKDLTAEEM) are lumenal.

Belongs to the glycosyltransferase 2 family.

The protein localises to the golgi apparatus membrane. It carries out the reaction an N-acylsphing-4-enine + UDP-alpha-D-glucose = a beta-D-glucosyl-(1&lt;-&gt;1')-N-acylsphing-4-enine + UDP + H(+). It participates in lipid metabolism; sphingolipid metabolism. Its function is as follows. Catalyzes the final step in the biosynthesis of the membrane lipid glucosylceramide (GluCer), the transfer of glucose to ceramide. Glucosylceramides play important roles in growth, differentiation and pathogenicity. The chain is Ceramide glucosyltransferase from Candida albicans (strain SC5314 / ATCC MYA-2876) (Yeast).